The primary structure comprises 242 residues: Biosynthetic peptidoglycan transglycosylase (242 aa).

A helical transmembrane segment spans residues 19-39 (LMVVLAVFWGGGIALFSVAPV).

The protein belongs to the glycosyltransferase 51 family.

The protein localises to the cell inner membrane. It carries out the reaction [GlcNAc-(1-&gt;4)-Mur2Ac(oyl-L-Ala-gamma-D-Glu-L-Lys-D-Ala-D-Ala)](n)-di-trans,octa-cis-undecaprenyl diphosphate + beta-D-GlcNAc-(1-&gt;4)-Mur2Ac(oyl-L-Ala-gamma-D-Glu-L-Lys-D-Ala-D-Ala)-di-trans,octa-cis-undecaprenyl diphosphate = [GlcNAc-(1-&gt;4)-Mur2Ac(oyl-L-Ala-gamma-D-Glu-L-Lys-D-Ala-D-Ala)](n+1)-di-trans,octa-cis-undecaprenyl diphosphate + di-trans,octa-cis-undecaprenyl diphosphate + H(+). It participates in cell wall biogenesis; peptidoglycan biosynthesis. Functionally, peptidoglycan polymerase that catalyzes glycan chain elongation from lipid-linked precursors. In Escherichia coli (strain SMS-3-5 / SECEC), this protein is Biosynthetic peptidoglycan transglycosylase.